The primary structure comprises 402 residues: Prostaglandin E2 receptor EP1 subtype (402 aa).

At 1–35 the chain is on the extracellular side; sequence MSPCGPLNLSLAGEATTCAAPWVPNTSAVPPSGAS. Asparagine 8 and asparagine 25 each carry an N-linked (GlcNAc...) asparagine glycan. A helical transmembrane segment spans residues 36–62; sequence PALPIFSMTLGAVSNLLALALLAQAAG. Topologically, residues 63 to 72 are cytoplasmic; the sequence is RLRRRRSAAT. Residues 73 to 96 form a helical membrane-spanning segment; it reads FLLFVASLLATDLAGHVIPGALVL. The Extracellular portion of the chain corresponds to 97-111; sequence RLYTAGRAPAGGACH. Residues cysteine 110 and cysteine 188 are joined by a disulfide bond. Residues 112-133 form a helical membrane-spanning segment; it reads FLGGCMVFFGLCPLLLGCGMAV. The Cytoplasmic portion of the chain corresponds to 134 to 155; the sequence is ERCVGVTRPLLHAARVSVARAR. Residues 156-177 traverse the membrane as a helical segment; it reads LALAAVAAVALAVALLPLARVG. Residues 178–201 are Extracellular-facing; that stretch reads RYELQYPGTWCFIGLGPPGGWRQA. Residues 202-227 form a helical membrane-spanning segment; the sequence is LLAGLFASLGLVALLAALVCNTLSGL. The Cytoplasmic portion of the chain corresponds to 228-294; it reads ALLRARWRRR…ARRARAHDVE (67 aa). The interval 238–266 is disordered; sequence SRRPPPASGPDSRRRWGAHGPRSASASSA. Residues 295 to 321 form a helical membrane-spanning segment; it reads MVGQLVGIMVVSCICWSPMLVLVALAV. Over 322 to 332 the chain is Extracellular; sequence GGWSSTSLQRP. The helical transmembrane segment at 333 to 354 threads the bilayer; sequence LFLAVRLASWNQILDPWVYILL. Topologically, residues 355–402 are cytoplasmic; it reads RQAVLRQLLRLLPPRAGAKGGPAGLGLTPSAWEASSLRSSRHSGLSHF.

The protein belongs to the G-protein coupled receptor 1 family. In terms of processing, phosphorylated. Abundant in kidney. Lower level expression in lung, skeletal muscle and spleen, lowest expression in testis and not detected in liver brain and heart.

It localises to the cell membrane. In terms of biological role, receptor for prostaglandin E2 (PGE2). The activity of this receptor is mediated by G(q) proteins which activate a phosphatidylinositol-calcium second messenger system. May play a role as an important modulator of renal function. Implicated the smooth muscle contractile response to PGE2 in various tissues. This is Prostaglandin E2 receptor EP1 subtype (PTGER1) from Homo sapiens (Human).